Reading from the N-terminus, the 223-residue chain is Voltage-dependent calcium channel gamma-1 subunit (223 aa).

Residues 1 to 10 (MSQTKTAKVR) are Cytoplasmic-facing. The helical transmembrane segment at 11–29 (VTLFFILAGGVLAMVAVVT) threads the bilayer. Residues 30-109 (DHWAVLSPHL…TQKEYSISAA (80 aa)) are Extracellular-facing. Asn-43 and Asn-80 each carry an N-linked (GlcNAc...) asparagine glycan. A disulfide bridge connects residues Cys-57 and Cys-81. The chain crosses the membrane as a helical span at residues 110-130 (AIAIFSLGFIIIGSICAFLSF). Residues 131–135 (GNKRD) are Cytoplasmic-facing. The helical transmembrane segment at 136 to 156 (YLLRPASMFYAFAGLCLIVSV) threads the bilayer. Over 157–180 (EVMRQSVKRMIDSEDTVWIEYYYS) the chain is Extracellular. Residues 181 to 205 (WSFACACAGFTLLFLGGLFLLLFSL) traverse the membrane as a helical segment. Over 206–223 (PRMPQNPWESCMDTESEH) the chain is Cytoplasmic.

This sequence belongs to the PMP-22/EMP/MP20 family. CACNG subfamily. As to quaternary structure, component of a calcium channel complex consisting of a pore-forming alpha subunit (CACNA1S) and the ancillary subunits CACNB1 or CACNB2, CACNG1 and CACNA2D1. The channel complex contains alpha, beta, gamma and delta subunits in a 1:1:1:1 ratio, i.e. it contains either CACNB1 or CACNB2. Post-translationally, N-glycosylated. Skeletal muscle.

It localises to the cell membrane. It is found in the sarcolemma. Its function is as follows. Regulatory subunit of the voltage-gated calcium channel that gives rise to L-type calcium currents in skeletal muscle. Regulates channel inactivation kinetics. This is Voltage-dependent calcium channel gamma-1 subunit (Cacng1) from Rattus norvegicus (Rat).